The following is a 346-amino-acid chain: MAASQAVEEMRSRVVLGEFGVRNVHTTDFPGNYSGYDDAWDQDRFEKNFRVDVVHMDENSLEFDMVGIDAAIANAFRRILLAEVPTMAVEKVLVYNNTSIVQDEILAHRLGLIPIHADPRLFEYRNQGDEEGTEIDTLQFRLQVRCTRNPHAAKDSSDPNELYVNHKVYTRHMTWIPLGNQADLFPEGTIRPVHDDILIAQLRPGQEIDLLMHCVKGIGKDHAKFSPVATASYRLLPDITLLEPVEGEAAEELSRCFSPGVIEVQEVQGKKVARVANPRLDTFSREIFRNEKLKKVVRLARVRDHYIFSVESTGVLPPDVLVSEAIKVLMGKCRRFLDELDAVQMD.

Position 2 is an N-acetylalanine (A2). S4 is subject to Phosphoserine.

It belongs to the archaeal Rpo3/eukaryotic RPB3 RNA polymerase subunit family. As to quaternary structure, component of the RNA polymerase I and RNA polymerase III complexes consisting of at least 13 and 17 subunits, respectively. Pol I complex consists of a ten-subunit catalytic core composed of POLR1A/RPA1, POLR1B/RPA2, POLR1C/RPAC1, POLR1D/RPAC2, POLR1H/RPA12, POLR2E/RPABC1, POLR2F/RPABC2, POLR2H/RPABC3, POLR2K/RPABC4 and POLR2L/RPABC5; a mobile stalk subunit POLR1F/RPA43 protruding from the core and additional subunits homologous to general transcription factors POLR1E/RPA49 and POLR1G/RPA34. Part of Pol I pre-initiation complex (PIC), in which Pol I core assembles with RRN3 and promoter-bound UTBF and SL1/TIF-IB complex. Pol III complex consists of a ten-subunit catalytic core composed of POLR3A/RPC1, POLR3B/RPC2, POLR1C/RPAC1, POLR1D/RPAC2, POLR3K/RPC10, POLR2E/RPABC1, POLR2F/RPABC2, POLR2H/RPABC3, POLR2K/RPABC4 and POLR2L/RPABC5; a mobile stalk composed of two subunits POLR3H/RPC8 and CRCP/RPC9, protruding from the core and functioning primarily in transcription initiation; and additional subunits homologous to general transcription factors of the RNA polymerase II machinery, POLR3C/RPC3-POLR3F/RPC6-POLR3G/RPC7 heterotrimer required for transcription initiation and POLR3D/RPC4-POLR3E/RPC5 heterodimer involved in both transcription initiation and termination.

It is found in the nucleus. The protein localises to the nucleolus. The protein resides in the cytoplasm. It localises to the cytosol. In terms of biological role, DNA-dependent RNA polymerase catalyzes the transcription of DNA into RNA using the four ribonucleoside triphosphates as substrates. Common component of RNA polymerases I and III which synthesize ribosomal RNA precursors and short non-coding RNAs including 5S rRNA, snRNAs, tRNAs and miRNAs, respectively. POLR1C/RPAC1 is part of the polymerase core and may function as a clamp element that moves to open and close the cleft. This is DNA-directed RNA polymerases I and III subunit RPAC1 from Homo sapiens (Human).